Reading from the N-terminus, the 544-residue chain is Chaperonin GroEL 1 (544 aa).

Residues Thr29–Pro32, Asp86–Thr90, Gly413, Asn482–Leu484, and Asp498 each bind ATP.

Belongs to the chaperonin (HSP60) family. Forms a cylinder of 14 subunits composed of two heptameric rings stacked back-to-back. Interacts with the co-chaperonin GroES.

The protein localises to the cytoplasm. The catalysed reaction is ATP + H2O + a folded polypeptide = ADP + phosphate + an unfolded polypeptide.. Functionally, together with its co-chaperonin GroES, plays an essential role in assisting protein folding. The GroEL-GroES system forms a nano-cage that allows encapsulation of the non-native substrate proteins and provides a physical environment optimized to promote and accelerate protein folding. This Chloroflexus aurantiacus (strain ATCC 29366 / DSM 635 / J-10-fl) protein is Chaperonin GroEL 1.